The primary structure comprises 164 residues: Histone H3-like centromeric protein CENH3 (164 aa).

Basic residues predominate over residues Met1–Lys11. The interval Met1–Gly71 is disordered. At Lys5 the chain carries N6,N6,N6-trimethyllysine; alternate. Residue Lys5 is modified to N6,N6-dimethyllysine; alternate. Residues Lys5, Lys19, and Lys30 each carry the N6-methyllysine; alternate modification. Over residues Ser12 to Pro26 the composition is skewed to basic and acidic residues. Lys19 carries the post-translational modification N6-acetyllysine; alternate. Residue Lys30 is modified to N6,N6,N6-trimethyllysine; alternate. Lys30 carries the N6,N6-dimethyllysine; alternate modification. Residues Thr40–Thr55 are compositionally biased toward low complexity. A compositionally biased stretch (basic residues) spans Thr60–Arg69.

This sequence belongs to the histone H3 family.

Its subcellular location is the chromosome. The protein localises to the centromere. It is found in the kinetochore. Functionally, histone H3-like variant which exclusively replaces conventional H3 in the nucleosome core of centromeric chromatin at the inner plate of the kinetochore. Required for recruitment and assembly of kinetochore proteins, mitotic progression and chromosome segregation. This Oryza sativa subsp. japonica (Rice) protein is Histone H3-like centromeric protein CENH3.